A 145-amino-acid chain; its full sequence is Single-stranded DNA-binding protein (145 aa).

An SSB domain is found at methionine 1 to glutamate 103. A compositionally biased stretch (polar residues) spans serine 112–aspartate 129. Residues serine 112–phenylalanine 145 form a disordered region. Residues asparagine 130–phenylalanine 145 are compositionally biased toward acidic residues.

In terms of assembly, homotetramer.

The sequence is that of Single-stranded DNA-binding protein (ssb) from Clostridium tetani (strain Massachusetts / E88).